Reading from the N-terminus, the 165-residue chain is Selenoprotein F (165 aa).

The N-terminal stretch at M1–A31 is a signal peptide. U96 is a non-standard amino acid (selenocysteine).

As to quaternary structure, forms a tight complex with UGGT1/UGCGL1. Interacts with UGGT2/UGCGL2. Interacts with RDH11. The N-terminus is blocked. Higher levels in prostate and thyroid gland.

It is found in the endoplasmic reticulum lumen. In terms of biological role, may be involved in redox reactions associated with the formation of disulfide bonds. May contribute to the quality control of protein folding in the endoplasmic reticulum. May regulate protein folding by enhancing the catalytic activity of UGGT1/UGCGL1 and UGGT2/UGCGL2. The chain is Selenoprotein F from Homo sapiens (Human).